We begin with the raw amino-acid sequence, 394 residues long: 4-hydroxybenzoate 3-monooxygenase (NAD(P)H) (394 aa).

Residues Glu-32, 42–47 (TIRAGV), and Gln-102 contribute to the FAD site. Substrate contacts are provided by residues Tyr-203, 214–216 (STR), and Tyr-224. Asp-288 serves as a coordination point for FAD. Pro-295 provides a ligand contact to substrate. FAD is bound at residue 301 to 302 (LN).

Belongs to the aromatic-ring hydroxylase family. It depends on FAD as a cofactor.

The enzyme catalyses 4-hydroxybenzoate + NADH + O2 + H(+) = 3,4-dihydroxybenzoate + NAD(+) + H2O. It catalyses the reaction 4-hydroxybenzoate + NADPH + O2 + H(+) = 3,4-dihydroxybenzoate + NADP(+) + H2O. Involved in the degradation of 4-hydroxybenzoate (4HB) via the protocatechuate (PCA) 2,3-cleavage pathway. Catalyzes the conversion of 4HB into 2-hydroxypenta-2,4-dienoate (HPD). It is highly specific for 4-hydroxybenzoate, and is able to utilize both NADH and NADPH as electron donors at approximately equal rates. This chain is 4-hydroxybenzoate 3-monooxygenase (NAD(P)H) (praI), found in Paenibacillus sp.